Reading from the N-terminus, the 352-residue chain is Protein-glutamate methylesterase/protein-glutamine glutaminase 2 (352 aa).

In terms of domain architecture, Response regulatory spans 1–116 (MVVDDSAVVR…KQFLTDSADE (116 aa)). D50 bears the 4-aspartylphosphate mark. The 191-residue stretch at 162–352 (AQTTERIVAI…MAREIVTQLQ (191 aa)) folds into the CheB-type methylesterase domain. Catalysis depends on residues S174, H200, and D296.

Belongs to the CheB family. In terms of processing, phosphorylated by CheA. Phosphorylation of the N-terminal regulatory domain activates the methylesterase activity.

The protein resides in the cytoplasm. The enzyme catalyses [protein]-L-glutamate 5-O-methyl ester + H2O = L-glutamyl-[protein] + methanol + H(+). It catalyses the reaction L-glutaminyl-[protein] + H2O = L-glutamyl-[protein] + NH4(+). Its function is as follows. Involved in chemotaxis. Part of a chemotaxis signal transduction system that modulates chemotaxis in response to various stimuli. Catalyzes the demethylation of specific methylglutamate residues introduced into the chemoreceptors (methyl-accepting chemotaxis proteins or MCP) by CheR. Also mediates the irreversible deamidation of specific glutamine residues to glutamic acid. This Xanthomonas euvesicatoria pv. vesicatoria (strain 85-10) (Xanthomonas campestris pv. vesicatoria) protein is Protein-glutamate methylesterase/protein-glutamine glutaminase 2.